A 432-amino-acid chain; its full sequence is Solute carrier family 38 member 8 (432 aa).

Helical transmembrane passes span 29–49, 59–79, 103–123, 144–164, 175–195, 215–237, 253–273, 292–312, 345–365, 368–388, and 409–429; these read AVFI…PWAF, FLVA…LGYA, LCEI…LRVI, AAQN…LSAL, ILGT…YYLW, VFSV…SIYC, LSLL…FLTF, IIVA…IVLF, LPLT…LPDL, IISI…GLCL, and GILS…VAMV.

The protein belongs to the amino acid/polyamine transporter 2 family. In terms of tissue distribution, expressed in neurons located in the gray matter. Highly expressed in thalamus, hypothalamus, amygdala and pons. Expressed in the CA3 area of hippocampus and in the Purkinje layer of the cerebellum (at protein level). Expressed in the eye.

Its subcellular location is the membrane. The protein resides in the cytoplasm. It is found in the cell cortex. The protein localises to the cell projection. It localises to the axon. The enzyme catalyses L-glutamine(out) = L-glutamine(in). The catalysed reaction is L-alanine(in) = L-alanine(out). It carries out the reaction L-histidine(out) = L-histidine(in). It catalyses the reaction L-aspartate(out) = L-aspartate(in). The enzyme catalyses L-arginine(in) = L-arginine(out). The catalysed reaction is L-leucine(in) = L-leucine(out). Its function is as follows. Electrogenic sodium-dependent amino acid transporter with a preference for L-glutamine, L-alanine, L-histidine, L-aspartate and L-arginine. May facilitate glutamine uptake in both excitatory and inhibitory neurons. The transport mechanism and stoichiometry remain to be elucidated. This is Solute carrier family 38 member 8 from Mus musculus (Mouse).